We begin with the raw amino-acid sequence, 67 residues long: Large ribosomal subunit protein bL32 (67 aa).

The span at 1–19 (MAVPKRKQSRANTHARRSQ) shows a compositional bias: basic residues. The segment at 1-20 (MAVPKRKQSRANTHARRSQW) is disordered.

The protein belongs to the bacterial ribosomal protein bL32 family.

The chain is Large ribosomal subunit protein bL32 from Leifsonia xyli subsp. xyli (strain CTCB07).